The sequence spans 75 residues: Protease B inhibitor 1 (75 aa).

Position 74 is a phosphothreonine (threonine 74).

Belongs to the protease inhibitor I9 family. In terms of assembly, part of the heterodimeric LMA1 complex together with the thioredoxin II/TRX2. LMA1 binds to the ATPase SEC18.

It localises to the cytoplasm. It is found in the nucleus. Its function is as follows. Cytosolic inhibitor of vacuolar proteinase B (yscB), probably regulating protease B activity during limited proteolysis. PBI2 is a component of the LMA1 complex, which is involved in the facilitation of vesicle fusion such as homotypic vacuole and ER-derived COPII vesicle fusion with the Golgi. The protein is Protease B inhibitor 1 (PBI2) of Saccharomyces cerevisiae (Baker's yeast).